Consider the following 286-residue polypeptide: Putative type II secretion system L-type protein YghE (286 aa).

The helical transmembrane segment at 136–156 threads the bilayer; sequence VMILPILLILVALAVERGVTL.

The protein belongs to the GSP L family.

The protein resides in the cell inner membrane. Involved in a type II secretion system (T2SS, formerly general secretion pathway, GSP) for the export of folded proteins across the outer membrane. The polypeptide is Putative type II secretion system L-type protein YghE (Escherichia coli (strain K12)).